The sequence spans 455 residues: Probable glycine dehydrogenase (decarboxylating) subunit 1 (455 aa).

The protein belongs to the GcvP family. N-terminal subunit subfamily. In terms of assembly, the glycine cleavage system is composed of four proteins: P, T, L and H. In this organism, the P 'protein' is a heterodimer of two subunits.

The enzyme catalyses N(6)-[(R)-lipoyl]-L-lysyl-[glycine-cleavage complex H protein] + glycine + H(+) = N(6)-[(R)-S(8)-aminomethyldihydrolipoyl]-L-lysyl-[glycine-cleavage complex H protein] + CO2. Its function is as follows. The glycine cleavage system catalyzes the degradation of glycine. The P protein binds the alpha-amino group of glycine through its pyridoxal phosphate cofactor; CO(2) is released and the remaining methylamine moiety is then transferred to the lipoamide cofactor of the H protein. The polypeptide is Probable glycine dehydrogenase (decarboxylating) subunit 1 (Saccharolobus islandicus (strain Y.G.57.14 / Yellowstone #1) (Sulfolobus islandicus)).